Reading from the N-terminus, the 446-residue chain is Phosphoglucosamine mutase (446 aa).

Serine 88 serves as the catalytic Phosphoserine intermediate. Serine 88, aspartate 231, aspartate 233, and aspartate 235 together coordinate Mg(2+). Phosphoserine is present on serine 88.

The protein belongs to the phosphohexose mutase family. It depends on Mg(2+) as a cofactor. In terms of processing, activated by phosphorylation.

The enzyme catalyses alpha-D-glucosamine 1-phosphate = D-glucosamine 6-phosphate. In terms of biological role, catalyzes the conversion of glucosamine-6-phosphate to glucosamine-1-phosphate. This chain is Phosphoglucosamine mutase, found in Methanococcus vannielii (strain ATCC 35089 / DSM 1224 / JCM 13029 / OCM 148 / SB).